The chain runs to 394 residues: NAD(P)H-quinone oxidoreductase subunit H (394 aa).

The protein belongs to the complex I 49 kDa subunit family. In terms of assembly, NDH-1 can be composed of about 15 different subunits; different subcomplexes with different compositions have been identified which probably have different functions.

The protein resides in the cellular thylakoid membrane. It catalyses the reaction a plastoquinone + NADH + (n+1) H(+)(in) = a plastoquinol + NAD(+) + n H(+)(out). It carries out the reaction a plastoquinone + NADPH + (n+1) H(+)(in) = a plastoquinol + NADP(+) + n H(+)(out). Functionally, NDH-1 shuttles electrons from an unknown electron donor, via FMN and iron-sulfur (Fe-S) centers, to quinones in the respiratory and/or the photosynthetic chain. The immediate electron acceptor for the enzyme in this species is believed to be plastoquinone. Couples the redox reaction to proton translocation, and thus conserves the redox energy in a proton gradient. Cyanobacterial NDH-1 also plays a role in inorganic carbon-concentration. In Synechococcus sp. (strain CC9311), this protein is NAD(P)H-quinone oxidoreductase subunit H.